We begin with the raw amino-acid sequence, 157 residues long: UPF0262 protein RHECIAT_CH0000657 (157 aa).

The protein belongs to the UPF0262 family.

The polypeptide is UPF0262 protein RHECIAT_CH0000657 (Rhizobium etli (strain CIAT 652)).